A 370-amino-acid chain; its full sequence is tRNA-specific 2-thiouridylase MnmA (370 aa).

Residues 7-14 (GISGGVDS) and Met-33 each bind ATP. An interaction with target base in tRNA region spans residues 104 to 106 (NPD). The Nucleophile role is filled by Cys-109. Residues Cys-109 and Cys-208 are joined by a disulfide bond. Residue Gly-134 participates in ATP binding. The interaction with tRNA stretch occupies residues 158–160 (KDQ). The active-site Cysteine persulfide intermediate is the Cys-208.

It belongs to the MnmA/TRMU family.

It localises to the cytoplasm. It catalyses the reaction S-sulfanyl-L-cysteinyl-[protein] + uridine(34) in tRNA + AH2 + ATP = 2-thiouridine(34) in tRNA + L-cysteinyl-[protein] + A + AMP + diphosphate + H(+). Catalyzes the 2-thiolation of uridine at the wobble position (U34) of tRNA, leading to the formation of s(2)U34. The chain is tRNA-specific 2-thiouridylase MnmA from Malacoplasma penetrans (strain HF-2) (Mycoplasma penetrans).